The following is a 95-amino-acid chain: Small ubiquitin-related modifier 2 (95 aa).

Residue Lys-11 forms a Glycyl lysine isopeptide (Lys-Gly) (interchain with G-Cter in SUMO) linkage. Positions 16 to 95 constitute a Ubiquitin-like domain; the sequence is DHINLKVAGQ…VFQQQTGGSF (80 aa). A Glycyl lysine isopeptide (Gly-Lys) (interchain with K-? in acceptor proteins) cross-link involves residue Gly-93. The propeptide occupies 94–95; it reads SF.

This sequence belongs to the ubiquitin family. SUMO subfamily. As to quaternary structure, interacts with sae2 and ube2i. Covalently attached to a number of proteins, including top2. Post-translationally, polymeric chains can be formed through Lys-11 cross-linking. In terms of processing, cleavage of precursor form by a sentrin-specific protease is necessary for function.

The protein resides in the nucleus. Ubiquitin-like protein that can be covalently attached to proteins as a monomer or as a lysine-linked polymer. Covalent attachment via an isopeptide bond to its substrates requires prior activation by the E1 complex sae1-sae2 and linkage to the E2 enzyme ube2i, and can be promoted by an E3 ligase such as pias1-4. This post-translational modification on lysine residues of proteins plays a crucial role in a number of cellular processes such as nuclear transport, DNA replication and repair, mitosis and signal transduction. Polymeric sumo2 chains are also susceptible to polyubiquitination which functions as a signal for proteasomal degradation of modified proteins. The polypeptide is Small ubiquitin-related modifier 2 (sumo2) (Xenopus tropicalis (Western clawed frog)).